Reading from the N-terminus, the 174-residue chain is Nucleoside-triphosphatase THEP1 (174 aa).

ATP-binding positions include 7–14 (GRPGVGKT) and 94–101 (LIIVDEIG).

Belongs to the THEP1 NTPase family.

The enzyme catalyses a ribonucleoside 5'-triphosphate + H2O = a ribonucleoside 5'-diphosphate + phosphate + H(+). Functionally, has nucleotide phosphatase activity towards ATP, GTP, CTP, TTP and UTP. May hydrolyze nucleoside diphosphates with lower efficiency. The chain is Nucleoside-triphosphatase THEP1 from Thermotoga maritima (strain ATCC 43589 / DSM 3109 / JCM 10099 / NBRC 100826 / MSB8).